We begin with the raw amino-acid sequence, 370 residues long: Putative replication factor C small subunit L478 (370 aa).

41 to 48 provides a ligand contact to ATP; the sequence is GPSGSGKK. Basic and acidic residues predominate over residues 342 to 353; sequence RNKEPEKSEKTK. Positions 342–370 are disordered; the sequence is RNKEPEKSEKTKSKTGKLSRTNSKKTIKN. Basic residues predominate over residues 354 to 370; the sequence is SKTGKLSRTNSKKTIKN.

It belongs to the activator 1 small subunits family. RfcS subfamily.

Functionally, part of the RFC clamp loader complex which loads the PCNA sliding clamp onto DNA. This is Putative replication factor C small subunit L478 from Acanthamoeba polyphaga (Amoeba).